Reading from the N-terminus, the 126-residue chain is Glycine cleavage system H protein (126 aa).

A Lipoyl-binding domain is found at 21-103 (TATIGISEHA…YEGGWIVKVK (83 aa)). Lys-62 is subject to N6-lipoyllysine.

Belongs to the GcvH family. As to quaternary structure, the glycine cleavage system is composed of four proteins: P, T, L and H. (R)-lipoate serves as cofactor.

The glycine cleavage system catalyzes the degradation of glycine. The H protein shuttles the methylamine group of glycine from the P protein to the T protein. This chain is Glycine cleavage system H protein, found in Vibrio campbellii (strain ATCC BAA-1116).